A 326-amino-acid polypeptide reads, in one-letter code: Endochitinase (326 aa).

An N-terminal signal peptide occupies residues 1–25; sequence MVYCTASLPLLLLLLVGLLAGEAFA. In terms of domain architecture, Chitin-binding type-1 spans 26–66; the sequence is EQCGRQAGGALCPGGLCCSQFGWCGSTSDYCGPTCQSQCGG. Intrachain disulfides connect cysteine 28-cysteine 43, cysteine 37-cysteine 49, cysteine 42-cysteine 56, cysteine 60-cysteine 64, cysteine 96-cysteine 158, cysteine 170-cysteine 178, and cysteine 277-cysteine 309. The Proton donor role is filled by glutamate 140.

This sequence belongs to the glycosyl hydrolase 19 family. Chitinase class I subfamily. In terms of tissue distribution, expressed in the pulp of the fruit (at protein level). Expressed in mesocarp (at protein level).

The enzyme catalyses Random endo-hydrolysis of N-acetyl-beta-D-glucosaminide (1-&gt;4)-beta-linkages in chitin and chitodextrins.. In terms of biological role, defense against chitin-containing fungal pathogens. Has in vitro antifungal activity against F.oxysporum inhibiting its growth and the branching of its hyphae. Has endochitinase activity, but no exochitinase or lysozyme activities. The chain is Endochitinase from Persea americana (Avocado).